The sequence spans 352 residues: Photosystem II D2 protein 2 (352 aa).

The chain crosses the membrane as a helical span at residues 40–60 (CAYLALGGWLTGTSFVTSWYT). Histidine 117 contributes to the chlorophyll a binding site. The chain crosses the membrane as a helical span at residues 124–140 (GFMLRQFEIARLVGVRP). The pheophytin a site is built by glutamine 129 and asparagine 142. Residues 152–165 (VFVSVFLMYPLGQS) form a helical membrane-spanning segment. Histidine 197 contributes to the chlorophyll a binding site. The chain crosses the membrane as a helical span at residues 207-227 (GALLCAIHGATVENTLFEDSE). Positions 214 and 261 each coordinate a plastoquinone. Histidine 214 lines the Fe cation pocket. Histidine 268 provides a ligand contact to Fe cation. A helical transmembrane segment spans residues 278 to 294 (GLWMSSIGIVGLALNLR).

This sequence belongs to the reaction center PufL/M/PsbA/D family. As to quaternary structure, PSII is composed of 1 copy each of membrane proteins PsbA, PsbB, PsbC, PsbD, PsbE, PsbF, PsbH, PsbI, PsbJ, PsbK, PsbL, PsbM, PsbT, PsbX, PsbY, PsbZ, Psb30/Ycf12, peripheral proteins PsbO, CyanoQ (PsbQ), PsbU, PsbV and a large number of cofactors. It forms dimeric complexes. The cofactor is The D1/D2 heterodimer binds P680, chlorophylls that are the primary electron donor of PSII, and subsequent electron acceptors. It shares a non-heme iron and each subunit binds pheophytin, quinone, additional chlorophylls, carotenoids and lipids. There is also a Cl(-1) ion associated with D1 and D2, which is required for oxygen evolution. The PSII complex binds additional chlorophylls, carotenoids and specific lipids..

It is found in the cellular thylakoid membrane. The enzyme catalyses 2 a plastoquinone + 4 hnu + 2 H2O = 2 a plastoquinol + O2. Functionally, photosystem II (PSII) is a light-driven water:plastoquinone oxidoreductase that uses light energy to abstract electrons from H(2)O, generating O(2) and a proton gradient subsequently used for ATP formation. It consists of a core antenna complex that captures photons, and an electron transfer chain that converts photonic excitation into a charge separation. The D1/D2 (PsbA/PsbD) reaction center heterodimer binds P680, the primary electron donor of PSII as well as several subsequent electron acceptors. D2 is needed for assembly of a stable PSII complex. The chain is Photosystem II D2 protein 2 from Synechococcus sp. (strain ATCC 27144 / PCC 6301 / SAUG 1402/1) (Anacystis nidulans).